The chain runs to 555 residues: Neutral amino acid transporter B(0) (555 aa).

The residue at position 1 (methionine 1) is an N-acetylmethionine. At 1–52 (MAVDPPKADPKGVVAVDPTANCGSGLKSREDQGAKAGGCCSSRDQVCRCLRA) the chain is on the cytoplasmic side. The helical transmembrane segment at 53 to 82 (NLLVLLTVAAAVAGVVLGLGVSAAGGAEAL) threads the bilayer. At 83-95 (GHARFTAFAFPGE) the chain is on the extracellular side. A helical transmembrane segment spans residues 96–117 (LLLRLLEMIILPLVVCSLIGGA). At 118 to 131 (ASLDPSALGRLGAW) the chain is on the cytoplasmic side. The helical transmembrane segment at 132–154 (ALLFFLVTTLLSSALGVALALAL) threads the bilayer. The Extracellular segment spans residues 155 to 239 (KPGAAFAAIN…SNATMDQPHC (85 aa)). 2 N-linked (GlcNAc...) asparagine glycosylation sites follow: asparagine 164 and asparagine 231. A helical membrane pass occupies residues 240-262 (EMKMNILGLVVFAIVFGVALRKL). At 263–271 (GPEGELLIR) the chain is on the cytoplasmic side. The helical transmembrane segment at 272 to 299 (FFNSFNDATMVLVSWIMWYAPIGILFLV) threads the bilayer. Residues 300 to 320 (AGKIVEMKDIRQLFIGLGKYI) are Extracellular-facing. A helical transmembrane segment spans residues 321–342 (VCCLLGHAIHGLLVLPLIYFLF). The Cytoplasmic segment spans residues 343–347 (TRKNP). Positions 348–378 (YRFLWGIVTPLATAFGTSSSSATLPLMMKCV) form an intramembrane region, discontinuously helical. Over 379-387 (EEKNGVAKH) the chain is Cytoplasmic. The helical transmembrane segment at 388–414 (ISRFILPIGATVNMDGAALFQCVAAVF) threads the bilayer. Residues glycine 396, threonine 398, and asparagine 400 each contribute to the Na(+) site. Residues 415–427 (IAQLNGMSLDFVK) lie on the Extracellular side of the membrane. The segment at residues 428–461 (IITILVTATASSVGAAGIPAGGVLTLAIILEAIS) is an intramembrane region (discontinuously helical). The Extracellular segment spans residues 462-474 (LPVKDISLILAVD). The helical transmembrane segment at 475 to 496 (WLVDRSCTVLNVEGDAFGAGLL) threads the bilayer. The Na(+) site is built by asparagine 485 and aspartate 489. Residues 497 to 555 (QSYVDRTKMPSSEPELIQVKNDVSLKPLPLATEEGNPLLKQCREPSGDSSATCEKESVM) lie on the Cytoplasmic side of the membrane. Phosphoserine occurs at positions 507, 508, 520, 545, and 553. Residues 534 to 555 (LLKQCREPSGDSSATCEKESVM) form a disordered region.

It belongs to the dicarboxylate/amino acid:cation symporter (DAACS) (TC 2.A.23) family. In terms of assembly, homotrimer.

The protein localises to the cell membrane. It is found in the melanosome. It carries out the reaction L-glutamine(out) + L-serine(in) + Na(+)(out) = L-glutamine(in) + L-serine(out) + Na(+)(in). The enzyme catalyses L-glutamine(in) + L-serine(out) + Na(+)(out) = L-glutamine(out) + L-serine(in) + Na(+)(in). The catalysed reaction is L-threonine(in) + L-glutamine(out) + Na(+)(out) = L-threonine(out) + L-glutamine(in) + Na(+)(in). It catalyses the reaction L-threonine(out) + L-glutamine(in) + Na(+)(out) = L-threonine(in) + L-glutamine(out) + Na(+)(in). It carries out the reaction L-asparagine(in) + L-glutamine(out) + Na(+)(out) = L-asparagine(out) + L-glutamine(in) + Na(+)(in). The enzyme catalyses L-asparagine(out) + L-glutamine(in) + Na(+)(out) = L-asparagine(in) + L-glutamine(out) + Na(+)(in). The catalysed reaction is L-glutamine(in) + L-alanine(out) + Na(+)(out) = L-glutamine(out) + L-alanine(in) + Na(+)(in). It catalyses the reaction L-valine(out) + L-glutamine(in) + Na(+)(out) = L-valine(in) + L-glutamine(out) + Na(+)(in). It carries out the reaction L-glutamine(in) + L-methionine(out) + Na(+)(out) = L-glutamine(out) + L-methionine(in) + Na(+)(in). The enzyme catalyses L-glutamine(in) + L-glutamate(out) + Na(+)(out) + H(+)(out) = L-glutamine(out) + L-glutamate(in) + Na(+)(in) + H(+)(in). The catalysed reaction is D-serine(in) + L-glutamine(out) + Na(+)(out) = D-serine(out) + L-glutamine(in) + Na(+)(in). It catalyses the reaction D-serine(in) + L-alanine(out) + Na(+)(out) = D-serine(out) + L-alanine(in) + Na(+)(in). It carries out the reaction nitrate(in) = nitrate(out). The enzyme catalyses iodide(out) = iodide(in). The catalysed reaction is thiocyanate(in) = thiocyanate(out). Its activity is regulated as follows. Down-regulated at acidic pH. Sodium-coupled antiporter of neutral amino acids. In a tri-substrate transport cycle, exchanges neutral amino acids between the extracellular and intracellular compartments, coupled to the inward cotransport of at least one sodium ion. The preferred substrate is the essential amino acid L-glutamine, a precursor for biosynthesis of proteins, nucleotides and amine sugars as well as an alternative fuel for mitochondrial oxidative phosphorylation. Exchanges L-glutamine with other neutral amino acids such as L-serine, L-threonine and L-asparagine in a bidirectional way. Provides L-glutamine to proliferating stem and activated cells driving the metabolic switch toward cell differentiation. The transport cycle is usually pH-independent, with the exception of L-glutamate. Transports extracellular L-glutamate coupled to the cotransport of one proton and one sodium ion in exchange for intracellular L-glutamine counter-ion. May provide for L-glutamate uptake in glial cells regulating glutamine/glutamate cycle in the nervous system. Can transport D-amino acids. Mediates D-serine release from the retinal glia potentially affecting NMDA receptor function in retinal neurons. Displays sodium- and amino acid-dependent but uncoupled channel-like anion conductance with a preference SCN(-) &gt;&gt; NO3(-) &gt; I(-) &gt; Cl(-). Through binding of the fusogenic protein syncytin-1/ERVW-1 may mediate trophoblasts syncytialization, the spontaneous fusion of their plasma membranes, an essential process in placental development. This chain is Neutral amino acid transporter B(0) (Slc1a5), found in Rattus norvegicus (Rat).